Consider the following 145-residue polypeptide: MLTSEEKAAVTGFWGKVKVDEVGAEALGRLLVVYPWTQRFFEHFGDLSSADAIMHNDKVKAHGKRVLDAFSDGLKHLDDLKGAFAKLSELHCDKLHVDPENFRLLGNVLVVVLARHFGKDFTPVLQADYQKVVTGVANALAHRYH.

The Globin domain occupies Met1–His145. Thr11 is subject to Phosphothreonine. At Lys58 the chain carries N6-acetyllysine. Residue His62 participates in heme b binding. Residue Lys81 is modified to N6-acetyllysine. Residue His91 participates in heme b binding. Cys92 carries the S-nitrosocysteine modification.

The protein belongs to the globin family. As to quaternary structure, heterotetramer of two alpha chains and two beta chains. Red blood cells.

Functionally, involved in oxygen transport from the lung to the various peripheral tissues. The polypeptide is Hemoglobin subunit beta (HBB) (Rangifer tarandus (Reindeer)).